A 107-amino-acid chain; its full sequence is Ribonuclease P protein component 4 (107 aa).

The Zn(2+) site is built by Cys66, Cys69, Cys92, and Cys95.

The protein belongs to the eukaryotic/archaeal RNase P protein component 4 family. Consists of a catalytic RNA component and at least 4-5 protein subunits. It depends on Zn(2+) as a cofactor.

It localises to the cytoplasm. The catalysed reaction is Endonucleolytic cleavage of RNA, removing 5'-extranucleotides from tRNA precursor.. Part of ribonuclease P, a protein complex that generates mature tRNA molecules by cleaving their 5'-ends. In Methanosarcina mazei (strain ATCC BAA-159 / DSM 3647 / Goe1 / Go1 / JCM 11833 / OCM 88) (Methanosarcina frisia), this protein is Ribonuclease P protein component 4.